Here is a 640-residue protein sequence, read N- to C-terminus: 1-deoxy-D-xylulose-5-phosphate synthase (640 aa).

Thiamine diphosphate-binding positions include H78 and 119–121 (GHS). Mg(2+) is bound at residue D151. Thiamine diphosphate is bound by residues 152–153 (GA), N180, Y289, and E371. N180 is a Mg(2+) binding site.

The protein belongs to the transketolase family. DXPS subfamily. In terms of assembly, homodimer. Mg(2+) serves as cofactor. The cofactor is thiamine diphosphate.

The catalysed reaction is D-glyceraldehyde 3-phosphate + pyruvate + H(+) = 1-deoxy-D-xylulose 5-phosphate + CO2. The protein operates within metabolic intermediate biosynthesis; 1-deoxy-D-xylulose 5-phosphate biosynthesis; 1-deoxy-D-xylulose 5-phosphate from D-glyceraldehyde 3-phosphate and pyruvate: step 1/1. Functionally, catalyzes the acyloin condensation reaction between C atoms 2 and 3 of pyruvate and glyceraldehyde 3-phosphate to yield 1-deoxy-D-xylulose-5-phosphate (DXP). This Bartonella henselae (strain ATCC 49882 / DSM 28221 / CCUG 30454 / Houston 1) (Rochalimaea henselae) protein is 1-deoxy-D-xylulose-5-phosphate synthase.